A 65-amino-acid chain; its full sequence is Large ribosomal subunit protein bL35 (65 aa).

The protein belongs to the bacterial ribosomal protein bL35 family.

In Buchnera aphidicola subsp. Cinara cedri (strain Cc), this protein is Large ribosomal subunit protein bL35.